Reading from the N-terminus, the 551-residue chain is HTH-type transcriptional regulator SgrR (551 aa).

Positions 1-116 constitute an HTH marR-type domain; that stretch reads MPSARLQQQF…LVSHLGRSFR (116 aa). A DNA-binding region (H-T-H motif) is located at residues 26 to 49; it reads LNELAALLSCSRRHMRTLLNTMQD. Residues 163–492 are solute-binding; it reads ELEADIAHHW…IDWQADAARW (330 aa).

Its function is as follows. Activates the small RNA gene sgrS under glucose-phosphate stress conditions as well as yfdZ. Represses its own transcription under both stress and non-stress conditions. Might act as a sensor of the intracellular accumulation of phosphoglucose by binding these molecules in its C-terminal solute-binding domain. The polypeptide is HTH-type transcriptional regulator SgrR (Shigella flexneri serotype 5b (strain 8401)).